Reading from the N-terminus, the 247-residue chain is Small ribosomal subunit protein uS3 (247 aa).

The region spanning 51-119 (VAKRDKRPAG…ELHLNIVEIR (69 aa)) is the KH type-2 domain. Basic and acidic residues predominate over residues 224–233 (PSAHDRRQQE). The tract at residues 224–247 (PSAHDRRQQELQESGGASRPRRDR) is disordered.

This sequence belongs to the universal ribosomal protein uS3 family. As to quaternary structure, part of the 30S ribosomal subunit. Forms a tight complex with proteins S10 and S14.

Functionally, binds the lower part of the 30S subunit head. Binds mRNA in the 70S ribosome, positioning it for translation. The chain is Small ribosomal subunit protein uS3 from Jannaschia sp. (strain CCS1).